Here is a 732-residue protein sequence, read N- to C-terminus: TIR domain-containing adapter molecule 1 (732 aa).

Positions 1-153 (MDNPGPSLRG…CSSDIKGDPS (153 aa)) are TRIF-NTD. Positions 84-91 (EGPEEPPD) match the TRAF6-binding motif. The interval 144–191 (CSSDIKGDPSGFQPLHSHQGSLQPPSASPAVTRSQPRPIDTPDWSWGH) is disordered. The segment covering 159 to 178 (HSHQGSLQPPSASPAVTRSQ) has biased composition (polar residues). The short motif at 206 to 209 (LEIS) is the pLxIS motif element. Ser209 is modified (phosphoserine). Residue Lys228 forms a Glycyl lysine isopeptide (Lys-Gly) (interchain with G-Cter in ubiquitin) linkage. 2 short sequence motifs (TRAF6-binding) span residues 247-254 (QEPEEISW) and 296-306 (HCPIECTELST). A compositionally biased stretch (polar residues) spans 305-331 (STNSRSPLTSTTESVGKQWPITSQRSP). A disordered region spans residues 305–389 (STNSRSPLTS…TSTSPVLDHS (85 aa)). The span at 345–359 (SSSPPAQPPSLQASP) shows a compositional bias: low complexity. The region spanning 395–534 (KFYNFVVIHA…KVANTFKTQK (140 aa)) is the TIR domain. The interval 514-713 (WLDEHSPIFA…SSDDKTECSE (200 aa)) is sufficient to induce apoptosis. Disordered regions lie at residues 603 to 679 (TPSW…GPQP) and 696 to 732 (MWGH…ETPE). Composition is skewed to pro residues over residues 604–615 (PSWPGCPQPIPS) and 625–657 (PYSP…PPVS). The segment covering 658–671 (SPQSQSFPSASSPA) has biased composition (low complexity).

In terms of assembly, homodimer. Found in a multi-helicase-TICAM1 complex at least composed of DHX36, DDX1, DDX21 and TICAM1; this complex exists in resting cells with or without poly(I:C) RNA ligand stimulation. Interacts (via TIR domain) with DDX21 (via C-terminus). Interacts (via TIR domain) with DHX36 (via C-terminus). Interacts with AZI2 and IRF7. Interacts (when phosphorylated) with IRF3; following activation and phosphorylation on the pLxIS motif by TBK1, recruits IRF3. Interacts with TICAM2 in TLR4 recruitment. Interaction with PIAS4 inhibits the TICAM1-induced NF-kappa-B, IRF and IFNB1 activation. Interacts with IKBKB and IKBKE. Interaction with SARM1 blocks TICAM1-dependent transcription factor activation. Interacts with TRAF3. Interacts with TRAFD1. Interacts with UBQLN1 (via UBA domain). Interacts with TBK1, TRAF6 and RIPK1 and these interactions are enhanced in the presence of WDFY1. Interacts (via the TIR domain) with TLR3 in response to poly(I:C) and this interaction is enhanced in the presence of WDFY1. Interacts with TLR4 in response to poly(I:C) in a WDFY1-dependent manner. Interacts with WDFY1 in response to poly(I:C). Interacts with TRIM56. Interacts (via the TIR domain) with TLR5. Interacts with TRIM8. Interacts with TAX1BP1 and TRIM32; these interactions target TICAM1 to TAX1BP1-mediated selective autophagic degradation. Interacts with DDX50. Phosphorylated by TBK1. Following activation, phosphorylated by TBK1 at Ser-209 in the pLxIS motif. The phosphorylated pLxIS motif constitutes an IRF3-binding motif, leading to recruitment of the transcription factor IRF3 to induce type-I interferons and other cytokines. Post-translationally, polyubiquitinated at Lys-228 by TRIM38 with 'Lys-48'-linked chains, leading to proteasomal degradation. Polyubiquitinated with 'Lys-6'- and 'Lys-33'-linked chains in a TRIM8-dependent manner; ubiquitination disrupts the interaction with TBK1 and subsequent interferon production.

Its subcellular location is the cytoplasm. It is found in the cytosol. It localises to the cytoplasmic vesicle. The protein resides in the autophagosome. The protein localises to the mitochondrion. Involved in innate immunity against invading pathogens. Adapter used by TLR3, TLR4 (through TICAM2) and TLR5 to mediate NF-kappa-B and interferon-regulatory factor (IRF) activation, and to induce apoptosis. Ligand binding to these receptors results in TRIF recruitment through its TIR domain. Distinct protein-interaction motifs allow recruitment of the effector proteins TBK1, TRAF6 and RIPK1, which in turn, lead to the activation of transcription factors IRF3 and IRF7, NF-kappa-B and FADD respectively. Phosphorylation by TBK1 on the pLxIS motif leads to recruitment and subsequent activation of the transcription factor IRF3 to induce expression of type I interferon and exert a potent immunity against invading pathogens. Component of a multi-helicase-TICAM1 complex that acts as a cytoplasmic sensor of viral double-stranded RNA (dsRNA) and plays a role in the activation of a cascade of antiviral responses including the induction of pro-inflammatory cytokines. This chain is TIR domain-containing adapter molecule 1 (Ticam1), found in Mus musculus (Mouse).